We begin with the raw amino-acid sequence, 397 residues long: Enoyl-[acyl-carrier-protein] reductase [NADH] (397 aa).

NAD(+) is bound by residues G48–Y53, F74–E75, D111–A112, and V139–A140. Substrate is bound at residue Y225. The Proton donor role is filled by Y235. Residues K244 and V273–T275 each bind NAD(+).

The protein belongs to the TER reductase family. As to quaternary structure, monomer.

It carries out the reaction a 2,3-saturated acyl-[ACP] + NAD(+) = a (2E)-enoyl-[ACP] + NADH + H(+). The protein operates within lipid metabolism; fatty acid biosynthesis. In terms of biological role, involved in the final reduction of the elongation cycle of fatty acid synthesis (FAS II). Catalyzes the reduction of a carbon-carbon double bond in an enoyl moiety that is covalently linked to an acyl carrier protein (ACP). The chain is Enoyl-[acyl-carrier-protein] reductase [NADH] from Burkholderia pseudomallei (strain K96243).